A 403-amino-acid chain; its full sequence is Protein-glutamate methylesterase/protein-glutamine glutaminase (403 aa).

The 119-residue stretch at 8 to 126 folds into the Response regulatory domain; it reads AVLIVDDSAL…SAHLRTVSRK (119 aa). Asp-59 is subject to 4-aspartylphosphate. The CheB-type methylesterase domain occupies 204-393; it reads PLRESGALQI…VSLDDMAATI (190 aa). Active-site residues include Ser-219, His-246, and Asp-342.

It belongs to the CheB family. Phosphorylated by CheA. Phosphorylation of the N-terminal regulatory domain activates the methylesterase activity.

It is found in the cytoplasm. The catalysed reaction is [protein]-L-glutamate 5-O-methyl ester + H2O = L-glutamyl-[protein] + methanol + H(+). It carries out the reaction L-glutaminyl-[protein] + H2O = L-glutamyl-[protein] + NH4(+). In terms of biological role, involved in chemotaxis. Part of a chemotaxis signal transduction system that modulates chemotaxis in response to various stimuli. Catalyzes the demethylation of specific methylglutamate residues introduced into the chemoreceptors (methyl-accepting chemotaxis proteins or MCP) by CheR. Also mediates the irreversible deamidation of specific glutamine residues to glutamic acid. This chain is Protein-glutamate methylesterase/protein-glutamine glutaminase, found in Treponema pallidum (strain Nichols).